The sequence spans 529 residues: Peptide chain release factor 3 (529 aa).

Positions 11 to 280 constitute a tr-type G domain; the sequence is SKRRTFAIIS…GLVAWAPAPM (270 aa). Residues 20–27, 88–92, and 142–145 each bind GTP; these read SHPDAGKT, DTPGH, and NKLD.

Belongs to the TRAFAC class translation factor GTPase superfamily. Classic translation factor GTPase family. PrfC subfamily.

It localises to the cytoplasm. Its function is as follows. Increases the formation of ribosomal termination complexes and stimulates activities of RF-1 and RF-2. It binds guanine nucleotides and has strong preference for UGA stop codons. It may interact directly with the ribosome. The stimulation of RF-1 and RF-2 is significantly reduced by GTP and GDP, but not by GMP. The polypeptide is Peptide chain release factor 3 (Pectobacterium carotovorum subsp. carotovorum (strain PC1)).